Consider the following 72-residue polypeptide: Large ribosomal subunit protein bL31 (72 aa).

Cys16, Cys18, Cys38, and Cys41 together coordinate Zn(2+).

Belongs to the bacterial ribosomal protein bL31 family. Type A subfamily. In terms of assembly, part of the 50S ribosomal subunit. It depends on Zn(2+) as a cofactor.

Binds the 23S rRNA. This Vibrio campbellii (strain ATCC BAA-1116) protein is Large ribosomal subunit protein bL31.